A 134-amino-acid chain; its full sequence is Transcription antitermination protein NusB (134 aa).

Belongs to the NusB family.

Functionally, involved in transcription antitermination. Required for transcription of ribosomal RNA (rRNA) genes. Binds specifically to the boxA antiterminator sequence of the ribosomal RNA (rrn) operons. In Shewanella sp. (strain W3-18-1), this protein is Transcription antitermination protein NusB.